A 577-amino-acid polypeptide reads, in one-letter code: Arginine--tRNA ligase (577 aa).

A 'HIGH' region motif is present at residues 122 to 132; the sequence is PNVAKEMHVGH.

This sequence belongs to the class-I aminoacyl-tRNA synthetase family. In terms of assembly, monomer.

It localises to the cytoplasm. It carries out the reaction tRNA(Arg) + L-arginine + ATP = L-arginyl-tRNA(Arg) + AMP + diphosphate. In Salmonella choleraesuis (strain SC-B67), this protein is Arginine--tRNA ligase.